The primary structure comprises 396 residues: 1-deoxy-D-xylulose 5-phosphate reductoisomerase (396 aa).

Positions 13, 14, 15, 16, and 127 each coordinate NADPH. Residue K128 participates in 1-deoxy-D-xylulose 5-phosphate binding. E129 contributes to the NADPH binding site. D153 contributes to the Mn(2+) binding site. 1-deoxy-D-xylulose 5-phosphate contacts are provided by S154, E155, S184, and H207. E155 is a binding site for Mn(2+). G213 is a binding site for NADPH. 4 residues coordinate 1-deoxy-D-xylulose 5-phosphate: S220, N225, K226, and E229. E229 contributes to the Mn(2+) binding site.

It belongs to the DXR family. Mg(2+) is required as a cofactor. It depends on Mn(2+) as a cofactor.

It catalyses the reaction 2-C-methyl-D-erythritol 4-phosphate + NADP(+) = 1-deoxy-D-xylulose 5-phosphate + NADPH + H(+). Its pathway is isoprenoid biosynthesis; isopentenyl diphosphate biosynthesis via DXP pathway; isopentenyl diphosphate from 1-deoxy-D-xylulose 5-phosphate: step 1/6. Catalyzes the NADPH-dependent rearrangement and reduction of 1-deoxy-D-xylulose-5-phosphate (DXP) to 2-C-methyl-D-erythritol 4-phosphate (MEP). The chain is 1-deoxy-D-xylulose 5-phosphate reductoisomerase from Pseudomonas syringae pv. tomato (strain ATCC BAA-871 / DC3000).